The sequence spans 316 residues: Ribose-phosphate pyrophosphokinase (316 aa).

Residues 37–39 (DGE) and 96–97 (RQ) contribute to the ATP site. Mg(2+) contacts are provided by His-130 and Asp-171. The active site involves Lys-194. 2 residues coordinate D-ribose 5-phosphate: Arg-196 and Asp-221.

The protein belongs to the ribose-phosphate pyrophosphokinase family. Class I subfamily. Homohexamer. It depends on Mg(2+) as a cofactor.

The protein resides in the cytoplasm. It catalyses the reaction D-ribose 5-phosphate + ATP = 5-phospho-alpha-D-ribose 1-diphosphate + AMP + H(+). The protein operates within metabolic intermediate biosynthesis; 5-phospho-alpha-D-ribose 1-diphosphate biosynthesis; 5-phospho-alpha-D-ribose 1-diphosphate from D-ribose 5-phosphate (route I): step 1/1. Involved in the biosynthesis of the central metabolite phospho-alpha-D-ribosyl-1-pyrophosphate (PRPP) via the transfer of pyrophosphoryl group from ATP to 1-hydroxyl of ribose-5-phosphate (Rib-5-P). This Rhodopirellula baltica (strain DSM 10527 / NCIMB 13988 / SH1) protein is Ribose-phosphate pyrophosphokinase.